A 190-amino-acid polypeptide reads, in one-letter code: MTITISAVILAGGLGRRMGGVDKGLQFWRGKPLIETVYQRLHRQIERISINANRNREIYARFGVPVFSDRLAGFQGPLSGILTALERATTDYVLFVPCDCPNFPLNLLEKLKSAVEFSQISLAYAHDGERDHPTFCLVSTQLKNALADYLAGGERRMLYFMQMHGAVAVDFSTEKQGFININNLADLNSP.

Residues 10–12, Lys23, Asn51, Asp69, and Asp99 contribute to the GTP site; that span reads LAG. Asp99 contributes to the Mg(2+) binding site.

Belongs to the MobA family. As to quaternary structure, monomer. It depends on Mg(2+) as a cofactor.

It localises to the cytoplasm. The enzyme catalyses Mo-molybdopterin + GTP + H(+) = Mo-molybdopterin guanine dinucleotide + diphosphate. Its function is as follows. Transfers a GMP moiety from GTP to Mo-molybdopterin (Mo-MPT) cofactor (Moco or molybdenum cofactor) to form Mo-molybdopterin guanine dinucleotide (Mo-MGD) cofactor. The sequence is that of Molybdenum cofactor guanylyltransferase from Mannheimia succiniciproducens (strain KCTC 0769BP / MBEL55E).